Consider the following 144-residue polypeptide: Lysozyme C II (144 aa).

The signal sequence occupies residues 1–15; it reads MRAVVVLLLVAVASA. Residues 16–144 form the C-type lysozyme domain; sequence KVYDRCELAR…LRSYVAGCGV (129 aa). Cystine bridges form between Cys-21/Cys-142, Cys-45/Cys-130, Cys-79/Cys-95, and Cys-91/Cys-109. Active-site residues include Glu-50 and Asp-67.

It is found in the secreted. It catalyses the reaction Hydrolysis of (1-&gt;4)-beta-linkages between N-acetylmuramic acid and N-acetyl-D-glucosamine residues in a peptidoglycan and between N-acetyl-D-glucosamine residues in chitodextrins.. Lysozymes have primarily a bacteriolytic function; those in tissues and body fluids are associated with the monocyte-macrophage system and enhance the activity of immunoagents. Has antibacterial activity against the Gram positive bacterium P.citreus. Has no antibacterial activity against the Gram negative bacteria E.coli and Y.ruckeri. Does not have hemolytic activity against trout erythrocytes. In Oncorhynchus mykiss (Rainbow trout), this protein is Lysozyme C II.